The chain runs to 286 residues: uncharacterized protein (286 aa).

This sequence belongs to the methyltransferase superfamily.

In terms of biological role, involved in osmoadaptation. This is an uncharacterized protein from Emericella nidulans (strain FGSC A4 / ATCC 38163 / CBS 112.46 / NRRL 194 / M139) (Aspergillus nidulans).